A 284-amino-acid chain; its full sequence is NAD kinase (284 aa).

Aspartate 67 functions as the Proton acceptor in the catalytic mechanism. Residues 67 to 68, 141 to 142, arginine 152, lysine 169, aspartate 171, 182 to 187, and glutamine 241 each bind NAD(+); these read DG, ND, and TGYSLS.

Belongs to the NAD kinase family. A divalent metal cation serves as cofactor.

Its subcellular location is the cytoplasm. It catalyses the reaction NAD(+) + ATP = ADP + NADP(+) + H(+). Functionally, involved in the regulation of the intracellular balance of NAD and NADP, and is a key enzyme in the biosynthesis of NADP. Catalyzes specifically the phosphorylation on 2'-hydroxyl of the adenosine moiety of NAD to yield NADP. In Geobacter sulfurreducens (strain ATCC 51573 / DSM 12127 / PCA), this protein is NAD kinase.